A 253-amino-acid polypeptide reads, in one-letter code: Ribosomal RNA small subunit methyltransferase A (253 aa).

S-adenosyl-L-methionine contacts are provided by His-12, Leu-14, Gly-39, Glu-60, Asp-81, and Asn-104.

The protein belongs to the class I-like SAM-binding methyltransferase superfamily. rRNA adenine N(6)-methyltransferase family. RsmA subfamily.

It is found in the cytoplasm. It catalyses the reaction adenosine(1518)/adenosine(1519) in 16S rRNA + 4 S-adenosyl-L-methionine = N(6)-dimethyladenosine(1518)/N(6)-dimethyladenosine(1519) in 16S rRNA + 4 S-adenosyl-L-homocysteine + 4 H(+). Specifically dimethylates two adjacent adenosines (A1518 and A1519) in the loop of a conserved hairpin near the 3'-end of 16S rRNA in the 30S particle. May play a critical role in biogenesis of 30S subunits. This is Ribosomal RNA small subunit methyltransferase A from Paracidovorax citrulli (strain AAC00-1) (Acidovorax citrulli).